The sequence spans 316 residues: LIM/homeobox protein lim-6 (316 aa).

LIM zinc-binding domains follow at residues lysine 40–lysine 101 and arginine 102–phenylalanine 163. Residues proline 186–asparagine 245 constitute a DNA-binding region (homeobox). Positions leucine 244–aspartate 297 are disordered. Over residues lysine 246–lysine 256 the composition is skewed to basic and acidic residues. A compositionally biased stretch (acidic residues) spans aspartate 273–threonine 289.

It localises to the nucleus. Transcription factor. Required for the terminal differentiation of sensory- and motor-neurons, especially GABAergic neurons, and for morphological aspects of uterine development. Plays a role in the cell-type-specific regulation of glutamic acid decarboxylase unc-25. Involved in promoting sleep-like behavioral quiescence, acting by modulating expression of transcription factor aptf-1 in the single sleep-active ring interneuron RIS. Plays a role in regulation of RIS differentiation. Required for the functional asymmetry of the ASER and ASEL chemosensory neuron pair, conferring the ability to discriminate sodium from chloride, perhaps by modulating expression of receptor-type guanylate cyclases, such as gcy-5. Involved in regulating postembryonic axon maintenance in the ventral nerve cord, acting in concert with LIM homeobox protein ceh-14, via modulation of expression of immunoglobulin domain zig genes in the interneuron PVT. May play a role in the functions of the excretory gland cell. This chain is LIM/homeobox protein lim-6, found in Caenorhabditis elegans.